The chain runs to 229 residues: Urease accessory protein UreF (229 aa).

Belongs to the UreF family. As to quaternary structure, ureD, UreF and UreG form a complex that acts as a GTP-hydrolysis-dependent molecular chaperone, activating the urease apoprotein by helping to assemble the nickel containing metallocenter of UreC. The UreE protein probably delivers the nickel.

The protein localises to the cytoplasm. Functionally, required for maturation of urease via the functional incorporation of the urease nickel metallocenter. The polypeptide is Urease accessory protein UreF (Methylobacterium radiotolerans (strain ATCC 27329 / DSM 1819 / JCM 2831 / NBRC 15690 / NCIMB 10815 / 0-1)).